The primary structure comprises 271 residues: Bis(5'-nucleosyl)-tetraphosphatase, symmetrical (271 aa).

The protein belongs to the Ap4A hydrolase family.

The catalysed reaction is P(1),P(4)-bis(5'-adenosyl) tetraphosphate + H2O = 2 ADP + 2 H(+). Hydrolyzes diadenosine 5',5'''-P1,P4-tetraphosphate to yield ADP. The protein is Bis(5'-nucleosyl)-tetraphosphatase, symmetrical of Aliivibrio fischeri (strain MJ11) (Vibrio fischeri).